Reading from the N-terminus, the 492-residue chain is MDPYKYRPSSSFNAPMWSTNSGAPVWNNDNSLTVGSRGPILLEDYHLVEKIADFDRERIPERVVHARGATAKGFFEVTHDVSHLTCADFLRAPGVQTPVIVRFSTVIHERGSPETLRDPRGFAIKFYTREGNWDLVGNNFPVFFIRDGMKFPDMVHALKPNPKTHIQENWRILDFFSHHPESLHMFTFLFDDIGVPADYRHMDGSGVNTYTLVNRAGKAHYVKFHWKPTCGVKSLLEEEAVTVGGTNHSHATKDLTDSIAAGNYPEWTFYIQTIDPDYEERFDFDPLDVTKTWPEDVVPLQPVGRLVLNRNIDNFFSENEQLAFCPGIIVPGVYYSDDKLLQTRIFSYSDTQRHRLGPNYLLLPANAPKCSHHNNHYDGLMNFMHRDEEVDYFPSRFDPAKHAPRYPIPSRTLNGRREKMVIEKENNFKQPGERYRSMDPARQERFINRWIDALSDPRLTHEIKAIWLSYWSQADKSLGQKLASRLSSKPSM.

Residues His-65 and Asn-138 contribute to the active site. Heme is bound at residue Tyr-348.

The protein belongs to the catalase family. Homotetramer. Requires heme as cofactor.

It is found in the peroxisome. It localises to the glyoxysome. The catalysed reaction is 2 H2O2 = O2 + 2 H2O. Its function is as follows. Occurs in almost all aerobically respiring organisms and serves to protect cells from the toxic effects of hydrogen peroxide. The chain is Catalase-1 (CAT1) from Triticum aestivum (Wheat).